The chain runs to 554 residues: 2-succinyl-5-enolpyruvyl-6-hydroxy-3-cyclohexene-1-carboxylate synthase (554 aa).

Belongs to the TPP enzyme family. MenD subfamily. Homodimer. Mg(2+) is required as a cofactor. The cofactor is Mn(2+). Requires thiamine diphosphate as cofactor.

It carries out the reaction isochorismate + 2-oxoglutarate + H(+) = 5-enolpyruvoyl-6-hydroxy-2-succinyl-cyclohex-3-ene-1-carboxylate + CO2. It participates in quinol/quinone metabolism; 1,4-dihydroxy-2-naphthoate biosynthesis; 1,4-dihydroxy-2-naphthoate from chorismate: step 2/7. Its pathway is quinol/quinone metabolism; menaquinone biosynthesis. Functionally, catalyzes the thiamine diphosphate-dependent decarboxylation of 2-oxoglutarate and the subsequent addition of the resulting succinic semialdehyde-thiamine pyrophosphate anion to isochorismate to yield 2-succinyl-5-enolpyruvyl-6-hydroxy-3-cyclohexene-1-carboxylate (SEPHCHC). In Flavobacterium johnsoniae (strain ATCC 17061 / DSM 2064 / JCM 8514 / BCRC 14874 / CCUG 350202 / NBRC 14942 / NCIMB 11054 / UW101) (Cytophaga johnsonae), this protein is 2-succinyl-5-enolpyruvyl-6-hydroxy-3-cyclohexene-1-carboxylate synthase.